The chain runs to 95 residues: Exodeoxyribonuclease 7 small subunit (95 aa).

Residues 65–95 (ETINPAETARPAKPENAPESPRMNDLFGTES) are disordered.

It belongs to the XseB family. In terms of assembly, heterooligomer composed of large and small subunits.

The protein localises to the cytoplasm. It carries out the reaction Exonucleolytic cleavage in either 5'- to 3'- or 3'- to 5'-direction to yield nucleoside 5'-phosphates.. In terms of biological role, bidirectionally degrades single-stranded DNA into large acid-insoluble oligonucleotides, which are then degraded further into small acid-soluble oligonucleotides. This Chlorobaculum tepidum (strain ATCC 49652 / DSM 12025 / NBRC 103806 / TLS) (Chlorobium tepidum) protein is Exodeoxyribonuclease 7 small subunit.